A 235-amino-acid polypeptide reads, in one-letter code: Probable carboxylesterase Os04g0669600 (235 aa).

Residues Ser-113, Asp-167, and His-199 each act as charge relay system in the active site.

This sequence belongs to the AB hydrolase superfamily. AB hydrolase 2 family.

Functionally, possesses carboxylesterase activity in vitro. This is Probable carboxylesterase Os04g0669600 from Oryza sativa subsp. japonica (Rice).